Here is a 251-residue protein sequence, read N- to C-terminus: DNA-directed RNA polymerase III subunit RPC7 (251 aa).

The tract at residues 186–251 is disordered; sequence DDASTGDGAA…EEDPNEEAAF (66 aa). A Phosphoserine modification is found at Ser189. Composition is skewed to acidic residues over residues 203–225 and 234–251; these read GEDDDLADDDFEEDEDEEDDDDY and GDDDDYGDEEDPNEEAAF.

It belongs to the eukaryotic RPC7 RNA polymerase subunit family. In terms of assembly, component of the RNA polymerase III (Pol III) complex consisting of 17 subunits.

It is found in the nucleus. Functionally, DNA-dependent RNA polymerase catalyzes the transcription of DNA into RNA using the four ribonucleoside triphosphates as substrates. Specific peripheric component of RNA polymerase III which synthesizes small RNAs, such as 5S rRNA and tRNAs. C31 is involved in the formation of the initiation complex. This chain is DNA-directed RNA polymerase III subunit RPC7 (RPC31), found in Saccharomyces cerevisiae (strain ATCC 204508 / S288c) (Baker's yeast).